A 385-amino-acid chain; its full sequence is 8-amino-7-oxononanoate synthase (385 aa).

Residue Arg21 participates in substrate binding. 108-109 (GF) lines the pyridoxal 5'-phosphate pocket. His133 contributes to the substrate binding site. Residues Ser179, His207, and Thr233 each contribute to the pyridoxal 5'-phosphate site. N6-(pyridoxal phosphate)lysine is present on Lys236. Thr352 lines the substrate pocket.

Belongs to the class-II pyridoxal-phosphate-dependent aminotransferase family. BioF subfamily. Homodimer. Requires pyridoxal 5'-phosphate as cofactor.

The enzyme catalyses 6-carboxyhexanoyl-[ACP] + L-alanine + H(+) = (8S)-8-amino-7-oxononanoate + holo-[ACP] + CO2. It participates in cofactor biosynthesis; biotin biosynthesis. Catalyzes the decarboxylative condensation of pimeloyl-[acyl-carrier protein] and L-alanine to produce 8-amino-7-oxononanoate (AON), [acyl-carrier protein], and carbon dioxide. The polypeptide is 8-amino-7-oxononanoate synthase (Pseudescherichia vulneris (Escherichia vulneris)).